We begin with the raw amino-acid sequence, 235 residues long: Putative N-acetylmannosamine-6-phosphate 2-epimerase (235 aa).

Belongs to the NanE family.

The enzyme catalyses an N-acyl-D-glucosamine 6-phosphate = an N-acyl-D-mannosamine 6-phosphate. Its pathway is amino-sugar metabolism; N-acetylneuraminate degradation; D-fructose 6-phosphate from N-acetylneuraminate: step 3/5. In terms of biological role, converts N-acetylmannosamine-6-phosphate (ManNAc-6-P) to N-acetylglucosamine-6-phosphate (GlcNAc-6-P). The sequence is that of Putative N-acetylmannosamine-6-phosphate 2-epimerase from Enterobacter sp. (strain 638).